The sequence spans 356 residues: Mannonate dehydratase (356 aa).

Belongs to the mannonate dehydratase family. Fe(2+) serves as cofactor. It depends on Mn(2+) as a cofactor.

The catalysed reaction is D-mannonate = 2-dehydro-3-deoxy-D-gluconate + H2O. Its pathway is carbohydrate metabolism; pentose and glucuronate interconversion. Its function is as follows. Catalyzes the dehydration of D-mannonate. This chain is Mannonate dehydratase, found in Levilactobacillus brevis (strain ATCC 367 / BCRC 12310 / CIP 105137 / JCM 1170 / LMG 11437 / NCIMB 947 / NCTC 947) (Lactobacillus brevis).